We begin with the raw amino-acid sequence, 154 residues long: 6,7-dimethyl-8-ribityllumazine synthase (154 aa).

5-amino-6-(D-ribitylamino)uracil-binding positions include phenylalanine 22, 56–58 (AFE), and 80–82 (AVI). Residue 85 to 86 (AT) participates in (2S)-2-hydroxy-3-oxobutyl phosphate binding. Histidine 88 acts as the Proton donor in catalysis. Residue phenylalanine 113 participates in 5-amino-6-(D-ribitylamino)uracil binding. A (2S)-2-hydroxy-3-oxobutyl phosphate-binding site is contributed by arginine 127.

The protein belongs to the DMRL synthase family.

It catalyses the reaction (2S)-2-hydroxy-3-oxobutyl phosphate + 5-amino-6-(D-ribitylamino)uracil = 6,7-dimethyl-8-(1-D-ribityl)lumazine + phosphate + 2 H2O + H(+). Its pathway is cofactor biosynthesis; riboflavin biosynthesis; riboflavin from 2-hydroxy-3-oxobutyl phosphate and 5-amino-6-(D-ribitylamino)uracil: step 1/2. Functionally, catalyzes the formation of 6,7-dimethyl-8-ribityllumazine by condensation of 5-amino-6-(D-ribitylamino)uracil with 3,4-dihydroxy-2-butanone 4-phosphate. This is the penultimate step in the biosynthesis of riboflavin. In Clostridium botulinum (strain Okra / Type B1), this protein is 6,7-dimethyl-8-ribityllumazine synthase.